The chain runs to 324 residues: UPF0158 protein CPn_0518/CP_0235/CPj0518/CpB0539 (324 aa).

It belongs to the UPF0158 family.

This chain is UPF0158 protein CPn_0518/CP_0235/CPj0518/CpB0539, found in Chlamydia pneumoniae (Chlamydophila pneumoniae).